Reading from the N-terminus, the 210-residue chain is Ribosomal RNA large subunit methyltransferase E (210 aa).

G64, W66, D84, D100, and D125 together coordinate S-adenosyl-L-methionine. Residue K165 is the Proton acceptor of the active site.

It belongs to the class I-like SAM-binding methyltransferase superfamily. RNA methyltransferase RlmE family.

Its subcellular location is the cytoplasm. The catalysed reaction is uridine(2552) in 23S rRNA + S-adenosyl-L-methionine = 2'-O-methyluridine(2552) in 23S rRNA + S-adenosyl-L-homocysteine + H(+). Functionally, specifically methylates the uridine in position 2552 of 23S rRNA at the 2'-O position of the ribose in the fully assembled 50S ribosomal subunit. The protein is Ribosomal RNA large subunit methyltransferase E of Chromohalobacter salexigens (strain ATCC BAA-138 / DSM 3043 / CIP 106854 / NCIMB 13768 / 1H11).